The following is a 233-amino-acid chain: Biosynthetic peptidoglycan transglycosylase (233 aa).

Residues 8–28 traverse the membrane as a helical segment; the sequence is LIALPVGIFIFFNAYVYGNII.

The protein belongs to the glycosyltransferase 51 family.

It is found in the cell inner membrane. The enzyme catalyses [GlcNAc-(1-&gt;4)-Mur2Ac(oyl-L-Ala-gamma-D-Glu-L-Lys-D-Ala-D-Ala)](n)-di-trans,octa-cis-undecaprenyl diphosphate + beta-D-GlcNAc-(1-&gt;4)-Mur2Ac(oyl-L-Ala-gamma-D-Glu-L-Lys-D-Ala-D-Ala)-di-trans,octa-cis-undecaprenyl diphosphate = [GlcNAc-(1-&gt;4)-Mur2Ac(oyl-L-Ala-gamma-D-Glu-L-Lys-D-Ala-D-Ala)](n+1)-di-trans,octa-cis-undecaprenyl diphosphate + di-trans,octa-cis-undecaprenyl diphosphate + H(+). Its pathway is cell wall biogenesis; peptidoglycan biosynthesis. In terms of biological role, peptidoglycan polymerase that catalyzes glycan chain elongation from lipid-linked precursors. The sequence is that of Biosynthetic peptidoglycan transglycosylase from Neisseria gonorrhoeae (strain ATCC 700825 / FA 1090).